Consider the following 262-residue polypeptide: Proenkephalin-A-A (262 aa).

A signal peptide spans 1-24; it reads MGLEARHCCMFLLVFASLSVEIRA. 3 disulfides stabilise this stretch: cysteine 26–cysteine 48, cysteine 30–cysteine 52, and cysteine 33–cysteine 65. 5 propeptides span residues 110 to 131, 139 to 177, 190 to 201, 211 to 221, and 229 to 253; these read MDELYHAEPEEDDAGGEILAKN, EYDSDRDAADLLRELLATSGDPESSIYHDNNSETPGEIN, STDLEDETSGIQ, VGRPEWWEDYQ, and TRFTDSFLPSDEDGESYSKENPDME.

It belongs to the opioid neuropeptide precursor family. Post-translationally, the N-terminal domain contains 6 conserved cysteines thought to be involved in disulfide bonding and/or processing.

It localises to the secreted. Its function is as follows. Enkephalin neuropeptides compete with and mimic the effects of opiate drugs. They play a role in a number of physiologic functions, including pain perception and responses to stress. This chain is Proenkephalin-A-A (penk-a), found in Xenopus laevis (African clawed frog).